We begin with the raw amino-acid sequence, 456 residues long: Bifunctional protein GlmU (456 aa).

The tract at residues 1–228 (MPQNTLNTVI…SHLAAGVNNK (228 aa)) is pyrophosphorylase. UDP-N-acetyl-alpha-D-glucosamine-binding positions include 11 to 14 (LAAG), Lys25, Gln75, 80 to 81 (GT), 102 to 104 (YGD), Gly138, Glu153, Asn168, and Asn226. Asp104 is a binding site for Mg(2+). Asn226 contacts Mg(2+). Positions 229 to 249 (RQLAELERIFQTEQAQELLKA) are linker. The interval 250–456 (GVTLRDPARF…GWMRPEKDKQ (207 aa)) is N-acetyltransferase. UDP-N-acetyl-alpha-D-glucosamine contacts are provided by Arg332 and Lys350. The active-site Proton acceptor is His362. Tyr365 and Asn376 together coordinate UDP-N-acetyl-alpha-D-glucosamine. Acetyl-CoA-binding positions include Ala379, 385 to 386 (NY), Ser404, Ala422, and Arg439.

The protein in the N-terminal section; belongs to the N-acetylglucosamine-1-phosphate uridyltransferase family. This sequence in the C-terminal section; belongs to the transferase hexapeptide repeat family. Homotrimer. It depends on Mg(2+) as a cofactor.

The protein localises to the cytoplasm. The catalysed reaction is alpha-D-glucosamine 1-phosphate + acetyl-CoA = N-acetyl-alpha-D-glucosamine 1-phosphate + CoA + H(+). It carries out the reaction N-acetyl-alpha-D-glucosamine 1-phosphate + UTP + H(+) = UDP-N-acetyl-alpha-D-glucosamine + diphosphate. The protein operates within nucleotide-sugar biosynthesis; UDP-N-acetyl-alpha-D-glucosamine biosynthesis; N-acetyl-alpha-D-glucosamine 1-phosphate from alpha-D-glucosamine 6-phosphate (route II): step 2/2. It participates in nucleotide-sugar biosynthesis; UDP-N-acetyl-alpha-D-glucosamine biosynthesis; UDP-N-acetyl-alpha-D-glucosamine from N-acetyl-alpha-D-glucosamine 1-phosphate: step 1/1. It functions in the pathway bacterial outer membrane biogenesis; LPS lipid A biosynthesis. Its function is as follows. Catalyzes the last two sequential reactions in the de novo biosynthetic pathway for UDP-N-acetylglucosamine (UDP-GlcNAc). The C-terminal domain catalyzes the transfer of acetyl group from acetyl coenzyme A to glucosamine-1-phosphate (GlcN-1-P) to produce N-acetylglucosamine-1-phosphate (GlcNAc-1-P), which is converted into UDP-GlcNAc by the transfer of uridine 5-monophosphate (from uridine 5-triphosphate), a reaction catalyzed by the N-terminal domain. The sequence is that of Bifunctional protein GlmU from Neisseria gonorrhoeae (strain ATCC 700825 / FA 1090).